A 205-amino-acid chain; its full sequence is Imidazoleglycerol-phosphate dehydratase (205 aa).

The protein belongs to the imidazoleglycerol-phosphate dehydratase family.

The catalysed reaction is D-erythro-1-(imidazol-4-yl)glycerol 3-phosphate = 3-(imidazol-4-yl)-2-oxopropyl phosphate + H2O. Its pathway is amino-acid biosynthesis; L-histidine biosynthesis; L-histidine from 5-phospho-alpha-D-ribose 1-diphosphate: step 6/9. The sequence is that of Imidazoleglycerol-phosphate dehydratase (HIS3) from Phaffia rhodozyma (Yeast).